Consider the following 431-residue polypeptide: Adenylosuccinate synthetase (431 aa).

GTP-binding positions include 13–19 (GDEGKGK) and 41–43 (GHT). Asp14 acts as the Proton acceptor in catalysis. Mg(2+)-binding residues include Asp14 and Gly41. IMP contacts are provided by residues 14–17 (DEGK), 39–42 (NAGH), Thr130, Arg144, Gln225, Thr240, and Arg304. Catalysis depends on His42, which acts as the Proton donor. Residue 300–306 (AVTGRPR) coordinates substrate. GTP is bound by residues Arg306, 332–334 (KLD), and 415–417 (STG).

Belongs to the adenylosuccinate synthetase family. Homodimer. The cofactor is Mg(2+).

The protein resides in the cytoplasm. It catalyses the reaction IMP + L-aspartate + GTP = N(6)-(1,2-dicarboxyethyl)-AMP + GDP + phosphate + 2 H(+). It functions in the pathway purine metabolism; AMP biosynthesis via de novo pathway; AMP from IMP: step 1/2. Plays an important role in the de novo pathway of purine nucleotide biosynthesis. Catalyzes the first committed step in the biosynthesis of AMP from IMP. The protein is Adenylosuccinate synthetase of Legionella pneumophila (strain Paris).